The chain runs to 322 residues: MRLSEFTTLFLLFSVLLLSASAEQCGSQAGGALCASGLCCSKFGWCGNTNEYCGPGNCQSQCPGGPGPSGDLGGVISNSMFDQMLNHRNDNACQGKNNFYSYNAFVTAAGSFPGFGTTGDITARKREIAAFLAQTSHETTGGWPTAPDGPYAWGYCFLREQGSPGDYCTPSSQWPCAPGRKYFGRGPIQISHNYNYGPCGRAIGVDLLNNPDLVATDPVISFKSAIWFWMTPQSPKPSCHDVITGRWQPSGADQAANRVPGFGVITNIINGGLECGHGSDSRVQDRIGFYRRYCGILGVSPGENLDCGNQRSFGNGLLVDIM.

The first 22 residues, 1–22 (MRLSEFTTLFLLFSVLLLSASA), serve as a signal peptide directing secretion. A Chitin-binding type-1 domain is found at 23–64 (EQCGSQAGGALCASGLCCSKFGWCGNTNEYCGPGNCQSQCPG). Cystine bridges form between cysteine 25-cysteine 40, cysteine 34-cysteine 46, cysteine 39-cysteine 53, and cysteine 58-cysteine 62. Proline 66 and proline 68 each carry 4-hydroxyproline. Disulfide bonds link cysteine 93/cysteine 156, cysteine 168/cysteine 176, and cysteine 275/cysteine 307. Residue glutamate 138 is the Proton donor of the active site. A propeptide spans 316-322 (GLLVDIM) (removed in mature form).

The protein belongs to the glycosyl hydrolase 19 family. Chitinase class I subfamily. In terms of processing, the 4-hydroxyproline residues are not glycosylated in this plant vacuolar protein.

The protein localises to the vacuole. Its subcellular location is the secreted. The protein resides in the cell wall. It carries out the reaction Random endo-hydrolysis of N-acetyl-beta-D-glucosaminide (1-&gt;4)-beta-linkages in chitin and chitodextrins.. In terms of biological role, defense against chitin-containing fungal pathogens. This Solanum lycopersicum (Tomato) protein is Basic 30 kDa endochitinase (CHI9).